We begin with the raw amino-acid sequence, 742 residues long: F-box only protein 30 (742 aa).

The segment at 49–108 (EHRLLCPFERVPCLNSNFGCPFTLARNKVAEHLEMCPASVVCCTMEWNRWPVSYSDRKSY) adopts a TRAF-type zinc-finger fold. The segment at 214-242 (SLQGTTNEMDEESNRESSQDRNAKDQDHL) is disordered. Basic and acidic residues predominate over residues 225 to 242 (ESNRESSQDRNAKDQDHL). A Phosphoserine modification is found at S379. The region spanning 607 to 653 (SDHLSSLPFEVLQHIAGFLDGFSLCQLACVSRLMRDICGSLLQSRGM) is the F-box domain.

Part of a SCF (SKP1-cullin-F-box) protein ligase complex. Interacts with SKP1, CUL1 and RBX1/ROC1. In terms of processing, auto-ubiquitinated. Post-translationally, may be neddylated. Neddylation may be required for E3 ligase activity.

The protein operates within protein modification; protein ubiquitination. Functionally, substrate-recognition component of the SCF (SKP1-CUL1-F-box protein)-type E3 ubiquitin ligase complex. Required for muscle atrophy following denervation. The sequence is that of F-box only protein 30 (Fbxo30) from Rattus norvegicus (Rat).